We begin with the raw amino-acid sequence, 283 residues long: Type III pantothenate kinase (283 aa).

9-16 (DIGNTRLK) serves as a coordination point for ATP. Residues Tyr-116 and 123-126 (GVDR) each bind substrate. The active-site Proton acceptor is the Asp-125. Residue Thr-149 participates in ATP binding. Thr-211 serves as a coordination point for substrate.

Belongs to the type III pantothenate kinase family. In terms of assembly, homodimer. It depends on NH4(+) as a cofactor. Requires K(+) as cofactor.

The protein localises to the cytoplasm. The catalysed reaction is (R)-pantothenate + ATP = (R)-4'-phosphopantothenate + ADP + H(+). It participates in cofactor biosynthesis; coenzyme A biosynthesis; CoA from (R)-pantothenate: step 1/5. Catalyzes the phosphorylation of pantothenate (Pan), the first step in CoA biosynthesis. This chain is Type III pantothenate kinase, found in Cupriavidus taiwanensis (strain DSM 17343 / BCRC 17206 / CCUG 44338 / CIP 107171 / LMG 19424 / R1) (Ralstonia taiwanensis (strain LMG 19424)).